A 315-amino-acid chain; its full sequence is ATP synthase gamma chain (315 aa).

The protein belongs to the ATPase gamma chain family. As to quaternary structure, F-type ATPases have 2 components, CF(1) - the catalytic core - and CF(0) - the membrane proton channel. CF(1) has five subunits: alpha(3), beta(3), gamma(1), delta(1), epsilon(1). CF(0) has three main subunits: a, b and c.

It localises to the cellular thylakoid membrane. Produces ATP from ADP in the presence of a proton gradient across the membrane. The gamma chain is believed to be important in regulating ATPase activity and the flow of protons through the CF(0) complex. This Trichormus variabilis (strain ATCC 29413 / PCC 7937) (Anabaena variabilis) protein is ATP synthase gamma chain.